Reading from the N-terminus, the 394-residue chain is Small ribosomal subunit protein mS79 (rPPR3b) (394 aa).

A mitochondrion-targeting transit peptide spans 1 to 24 (MSSLSRFLLRGNFSFSTHTNRRFF). PPR repeat units follow at residues 105–139 (KEGFVARIINLYGRVGMFENAQKVFDEMPERNCKR), 140–170 (TALSFNALLNACVNSKKFDLVEGIFKELPGK), 176–210 (DVASYNTLIKGLCGKGSFTEAVALIDEIENKGLKP), 211–245 (DHITFNILLHESYTKGKFEEGEQIWARMVEKNVKR), 246–280 (DIRSYNARLLGLAMENKSEEMVSLFDKLKGNELKP), 281–315 (DVFTFTAMIKGFVSEGKLDEAITWYKEIEKNGCRP), 316–350 (LKFVFNSLLPAICKAGDLESAYELCKEIFAKRLLV), and 351–385 (DEAVLQEVVDALVKGSKQDEAEEIVELAKTNDYLQ).

The protein belongs to the PPR family. P subfamily. In terms of assembly, component of the mitochondrial ribosome small subunit.

It localises to the mitochondrion. The sequence is that of Small ribosomal subunit protein mS79 (rPPR3b) from Arabidopsis thaliana (Mouse-ear cress).